The chain runs to 284 residues: Large ribosomal subunit protein uL2 (284 aa).

Residues 232 to 284 (RGTAMNPVDHPHGGGEGRHNGYIPRTPWGKVTKGLKTRDKRKSNKWIVKDRRK) are disordered. Residues 240-250 (DHPHGGGEGRH) are compositionally biased toward basic and acidic residues. Residues 264-284 (KGLKTRDKRKSNKWIVKDRRK) show a composition bias toward basic residues.

This sequence belongs to the universal ribosomal protein uL2 family. Part of the 50S ribosomal subunit. Forms a bridge to the 30S subunit in the 70S ribosome.

Functionally, one of the primary rRNA binding proteins. Required for association of the 30S and 50S subunits to form the 70S ribosome, for tRNA binding and peptide bond formation. It has been suggested to have peptidyltransferase activity; this is somewhat controversial. Makes several contacts with the 16S rRNA in the 70S ribosome. This chain is Large ribosomal subunit protein uL2, found in Chlamydia abortus (strain DSM 27085 / S26/3) (Chlamydophila abortus).